Here is a 587-residue protein sequence, read N- to C-terminus: 65-kDa microtubule-associated protein 1 (587 aa).

5 coiled-coil regions span residues 46–84, 151–181, 234–257, 290–317, and 461–489; these read QECL…TMSL, DESD…LRKV, LTLK…LIDL, ALAR…MKEI, and AMLD…VQEQ. Positions 474 to 494 are enriched in basic and acidic residues; the sequence is EEEKRRLREQKKVQEQPHVEQ. The tract at residues 474–587 is disordered; the sequence is EEEKRRLREQ…AADHQVPASP (114 aa). S503 is subject to Phosphoserine. A Phosphothreonine modification is found at T526. A compositionally biased stretch (polar residues) spans 531-542; the sequence is LSLNANQNGSRS. Residues S532 and S540 each carry the phosphoserine modification. 2 positions are modified to phosphothreonine: T543 and T552. Positions 543–553 are enriched in basic and acidic residues; sequence TAKEAGRRETL. Phosphoserine occurs at positions 573, 576, and 586.

Belongs to the MAP65/ASE1 family. In terms of assembly, forms dimer. Binds to MT, mostly with coaligned MT, both between parallel or antiparallel, forming thick bundles. Interacts with the alpha-tubulin subunit of the tubulin heterodimer. Bundles polymerized MT via the formation of 25-nm crossbridges at specific stages of the cell cycle (e.g. bundles microtubules in interphase, anaphase and telophase but does not bind microtubules in prophase or metaphase), at the plus-end, the minus-end, or along the entire length of MT, and along phragmoplast MT. Interacts with SH3P1 and MPK4. Post-translationally, basal phosphorylation at all stages of the cell cycle. MT-binding properties inhibited by hyperphosphorylation mediated by CDKs and/or MAPKs (e.g. ANP2, ANP3, MPK4 and MPK6) during prometaphase and metaphase. In terms of tissue distribution, expressed in all organs and tissues with the exception of sepals and anthers. Bound to subsets of microtubules in the cells of root epidermis, hypocotyl and cotyledons (at protein level).

It localises to the nucleus. Its subcellular location is the cytoplasm. It is found in the cytoskeleton. The protein localises to the spindle. The protein resides in the phragmoplast. It localises to the cell cortex. Functionally, microtubule-associated protein that bundle and stabilize adjacent microtubules (MT) of the cell cortex. Enhances MT nucleation. Can also bind to tubulin dimers and promotes their polymerization. Confers MT resistance to the drug propyzamide and cold conditions. Plays a role in the central spindle at anaphase to early cytokinesis but is not essential at the midline of the phragmoplast at later stages. Represses metaphase spindle organization and the transition to anaphase in dephosphorylated active form. Promotes the formation of a planar network of antiparallel microtubules. May be involved in stomatal movement modulation by regulating the dynamic and arrangement of cortical MT. In Arabidopsis thaliana (Mouse-ear cress), this protein is 65-kDa microtubule-associated protein 1 (MAP65-1).